The primary structure comprises 87 residues: RNA-binding protein Hfq (87 aa).

One can recognise a Sm domain in the interval D9–V68.

The protein belongs to the Hfq family. As to quaternary structure, homohexamer.

Functionally, RNA chaperone that binds small regulatory RNA (sRNAs) and mRNAs to facilitate mRNA translational regulation in response to envelope stress, environmental stress and changes in metabolite concentrations. Also binds with high specificity to tRNAs. The sequence is that of RNA-binding protein Hfq from Teredinibacter turnerae (strain ATCC 39867 / T7901).